We begin with the raw amino-acid sequence, 356 residues long: Phospho-N-acetylmuramoyl-pentapeptide-transferase (356 aa).

Helical transmembrane passes span 27 to 47 (AAVA…ILML), 73 to 93 (TMGG…WMDL), 97 to 117 (FVWA…LDDY), 134 to 154 (LLVE…RTGT), 163 to 183 (GIVI…IVGF), 195 to 215 (GLAT…VYLS), 232 to 252 (AGEL…FLWF), 258 to 278 (AVFM…TIAV), 285 to 305 (VLVL…IQVF), and 333 to 353 (TVVI…LATL).

It belongs to the glycosyltransferase 4 family. MraY subfamily. Mg(2+) serves as cofactor.

It localises to the cell inner membrane. The catalysed reaction is UDP-N-acetyl-alpha-D-muramoyl-L-alanyl-gamma-D-glutamyl-meso-2,6-diaminopimeloyl-D-alanyl-D-alanine + di-trans,octa-cis-undecaprenyl phosphate = di-trans,octa-cis-undecaprenyl diphospho-N-acetyl-alpha-D-muramoyl-L-alanyl-D-glutamyl-meso-2,6-diaminopimeloyl-D-alanyl-D-alanine + UMP. It functions in the pathway cell wall biogenesis; peptidoglycan biosynthesis. In terms of biological role, catalyzes the initial step of the lipid cycle reactions in the biosynthesis of the cell wall peptidoglycan: transfers peptidoglycan precursor phospho-MurNAc-pentapeptide from UDP-MurNAc-pentapeptide onto the lipid carrier undecaprenyl phosphate, yielding undecaprenyl-pyrophosphoryl-MurNAc-pentapeptide, known as lipid I. This Sphingopyxis alaskensis (strain DSM 13593 / LMG 18877 / RB2256) (Sphingomonas alaskensis) protein is Phospho-N-acetylmuramoyl-pentapeptide-transferase.